Reading from the N-terminus, the 256-residue chain is Leucyl/phenylalanyl-tRNA--protein transferase (256 aa).

This sequence belongs to the L/F-transferase family.

The protein localises to the cytoplasm. It catalyses the reaction N-terminal L-lysyl-[protein] + L-leucyl-tRNA(Leu) = N-terminal L-leucyl-L-lysyl-[protein] + tRNA(Leu) + H(+). It carries out the reaction N-terminal L-arginyl-[protein] + L-leucyl-tRNA(Leu) = N-terminal L-leucyl-L-arginyl-[protein] + tRNA(Leu) + H(+). The enzyme catalyses L-phenylalanyl-tRNA(Phe) + an N-terminal L-alpha-aminoacyl-[protein] = an N-terminal L-phenylalanyl-L-alpha-aminoacyl-[protein] + tRNA(Phe). Its function is as follows. Functions in the N-end rule pathway of protein degradation where it conjugates Leu, Phe and, less efficiently, Met from aminoacyl-tRNAs to the N-termini of proteins containing an N-terminal arginine or lysine. The protein is Leucyl/phenylalanyl-tRNA--protein transferase of Hydrogenovibrio crunogenus (strain DSM 25203 / XCL-2) (Thiomicrospira crunogena).